The primary structure comprises 378 residues: Queuine tRNA-ribosyltransferase (378 aa).

The active-site Proton acceptor is aspartate 89. Substrate is bound by residues 89–93, aspartate 143, glutamine 187, and glycine 214; that span reads DSGGF. Residues 245–251 form an RNA binding region; sequence GVGKPED. The active-site Nucleophile is the aspartate 264. The segment at 269–273 is RNA binding; important for wobble base 34 recognition; sequence TRNAR. Zn(2+)-binding residues include cysteine 302, cysteine 304, cysteine 307, and histidine 333.

Belongs to the queuine tRNA-ribosyltransferase family. Homodimer. Within each dimer, one monomer is responsible for RNA recognition and catalysis, while the other monomer binds to the replacement base PreQ1. Requires Zn(2+) as cofactor.

It carries out the reaction 7-aminomethyl-7-carbaguanine + guanosine(34) in tRNA = 7-aminomethyl-7-carbaguanosine(34) in tRNA + guanine. It functions in the pathway tRNA modification; tRNA-queuosine biosynthesis. In terms of biological role, catalyzes the base-exchange of a guanine (G) residue with the queuine precursor 7-aminomethyl-7-deazaguanine (PreQ1) at position 34 (anticodon wobble position) in tRNAs with GU(N) anticodons (tRNA-Asp, -Asn, -His and -Tyr). Catalysis occurs through a double-displacement mechanism. The nucleophile active site attacks the C1' of nucleotide 34 to detach the guanine base from the RNA, forming a covalent enzyme-RNA intermediate. The proton acceptor active site deprotonates the incoming PreQ1, allowing a nucleophilic attack on the C1' of the ribose to form the product. After dissociation, two additional enzymatic reactions on the tRNA convert PreQ1 to queuine (Q), resulting in the hypermodified nucleoside queuosine (7-(((4,5-cis-dihydroxy-2-cyclopenten-1-yl)amino)methyl)-7-deazaguanosine). The chain is Queuine tRNA-ribosyltransferase from Yersinia enterocolitica serotype O:8 / biotype 1B (strain NCTC 13174 / 8081).